The chain runs to 302 residues: GTP cyclohydrolase FolE2 (302 aa).

Positions 1–27 are disordered; that stretch reads MPKKQLPPKEERHKLFGSVPPKERTKP.

Belongs to the GTP cyclohydrolase IV family.

The catalysed reaction is GTP + H2O = 7,8-dihydroneopterin 3'-triphosphate + formate + H(+). It participates in cofactor biosynthesis; 7,8-dihydroneopterin triphosphate biosynthesis; 7,8-dihydroneopterin triphosphate from GTP: step 1/1. Converts GTP to 7,8-dihydroneopterin triphosphate. The sequence is that of GTP cyclohydrolase FolE2 from Oceanobacillus iheyensis (strain DSM 14371 / CIP 107618 / JCM 11309 / KCTC 3954 / HTE831).